The primary structure comprises 463 residues: NEDD8-activating enzyme E1 catalytic subunit (463 aa).

Alanine 2 is modified (N-acetylalanine). Residues 53-70 (HPDFEPSTESLQFLLDTC) form an interaction with UBE2M N-terminus region. ATP-binding positions include 100–124 (DMDT…GRPK) and 148–171 (IQDF…SIIA). Interaction with UBE2M N-terminus stretches follow at residues 157–161 (RQFHI) and 192–217 (PSSI…LPGM). Residues 227 to 229 (LYP) are interaction with NEDD8. Catalysis depends on cysteine 237, which acts as the Glycyl thioester intermediate. 2 interaction with NAE1 regions span residues 242–248 (MPRLPEH) and 292–295 (YNIR). The interval 331 to 338 (IATSAYIP) is interaction with UBE2M N-terminus. The interaction with NEDD8 stretch occupies residues 352 to 357 (YTYTFE). The interval 368–463 (SQLPQNIQFS…TVLFKLHFTS (96 aa)) is interaction with UBE2M core domain.

It belongs to the ubiquitin-activating E1 family. UBA3 subfamily. As to quaternary structure, heterodimer of UBA3 and NAE1. Interacts with NEDD8, UBE2F and UBE2M. Binds ESR1 and ESR2 with bound steroid ligand. Interacts with TBATA. In terms of tissue distribution, ubiquitously expressed.

The catalysed reaction is ATP + [NEDD8 protein] + [E1 NEDD8-activating enzyme]-L-cysteine = AMP + diphosphate + [E1 NEDD8-activating enzyme]-S-[NEDD8 protein]-yl-L-cysteine.. It functions in the pathway protein modification; protein neddylation. Binding of TP53BP2 to the regulatory subunit NAE1 decreases activity. Catalytic subunit of the dimeric UBA3-NAE1 E1 enzyme. E1 activates NEDD8 by first adenylating its C-terminal glycine residue with ATP, thereafter linking this residue to the side chain of the catalytic cysteine, yielding a NEDD8-UBA3 thioester and free AMP. E1 finally transfers NEDD8 to the catalytic cysteine of UBE2M. Down-regulates steroid receptor activity. Necessary for cell cycle progression. The sequence is that of NEDD8-activating enzyme E1 catalytic subunit (UBA3) from Homo sapiens (Human).